Consider the following 880-residue polypeptide: DNA polymerase I (880 aa).

The region spanning 174–268 is the 5'-3' exonuclease domain; sequence TPEQIIDMKG…SGLEYQGFNR (95 aa). In terms of domain architecture, 3'-5' exonuclease spans 302-470; the sequence is DINVKTVTDV…LREKLVQELE (169 aa).

The protein belongs to the DNA polymerase type-A family. Single-chain monomer with multiple functions.

It catalyses the reaction DNA(n) + a 2'-deoxyribonucleoside 5'-triphosphate = DNA(n+1) + diphosphate. Functionally, in addition to polymerase activity, this DNA polymerase exhibits 3'-5' and 5'-3' exonuclease activity. The chain is DNA polymerase I (polA) from Bacillus subtilis (strain 168).